The sequence spans 90 residues: Bombyxin B-7 (90 aa).

The signal sequence occupies residues 1-20 (MMKTSVMLMLVVVISLMCSG). Cystine bridges form between C30/C76, C42/C89, and C75/C80. Residues 49-67 (GGAQYAPYFWTRQYLGSRG) constitute a propeptide, c peptide like.

It belongs to the insulin family. As to quaternary structure, heterodimer of a B chain and an A chain linked by two disulfide bonds.

The protein resides in the secreted. Brain peptide responsible for activation of prothoracic glands to produce ecdysone in insects. The polypeptide is Bombyxin B-7 (BBXB7) (Bombyx mori (Silk moth)).